Reading from the N-terminus, the 359-residue chain is Glycerol-1-phosphate dehydrogenase [NAD(P)+] (359 aa).

NAD(+) contacts are provided by residues 107–111 (GRVID) and 129–132 (TAAS). Substrate is bound at residue Asp-134. Residue Ser-138 participates in NAD(+) binding. Asp-181 lines the substrate pocket. Positions 181 and 261 each coordinate Zn(2+). His-265 contributes to the substrate binding site. His-277 provides a ligand contact to Zn(2+).

It belongs to the glycerol-1-phosphate dehydrogenase family. Zn(2+) is required as a cofactor.

It localises to the cytoplasm. It catalyses the reaction sn-glycerol 1-phosphate + NAD(+) = dihydroxyacetone phosphate + NADH + H(+). It carries out the reaction sn-glycerol 1-phosphate + NADP(+) = dihydroxyacetone phosphate + NADPH + H(+). Its pathway is membrane lipid metabolism; glycerophospholipid metabolism. In terms of biological role, catalyzes the NAD(P)H-dependent reduction of dihydroxyacetonephosphate (DHAP or glycerone phosphate) to glycerol 1-phosphate (G1P). The G1P thus generated is used as the glycerophosphate backbone of phospholipids in the cellular membranes of Archaea. In Methanosphaerula palustris (strain ATCC BAA-1556 / DSM 19958 / E1-9c), this protein is Glycerol-1-phosphate dehydrogenase [NAD(P)+].